The sequence spans 93 residues: Parbolysin P3 (93 aa).

Disulfide bonds link Cys16–Cys37, Cys22–Cys33, and Cys47–Cys60.

This sequence belongs to the worm cytolysin family. Localized within the skin and proboscis and are most readily isolated from body mucus secretions.

Its subcellular location is the secreted. In terms of biological role, cytolysin that shows hemolytic activity (on bovine erythrocytes, HC(50)=5.75 mg/ml). This hemolytic activity is completely inhibited by small unilamelar vesicles composed of PC/PG, PC/PI and PC/PS in 1:1 molar ratios (with at least 100 mg/ml concentration). The sequence is that of Parbolysin P3 from Parborlasia corrugatus (Antarctic nemertean worm).